The following is a 983-amino-acid chain: MFVASKQADEQKKLVIEQEVQKRQFKKIEELKADMQKGVNPFFKVLFDGGNRLFGFPETFIYSSIFILFVTIVLSVILFQAYEPVLIVAIVIVLVALGFKKDYRLYQRMERAMKFKKPFLFKGVKNKAFMSIFSMKPSKEMANDIHLNPNREDRLVSAANSYLANNYECFLDDGVILTNNYSLLGTIKLGGIDFLTTSKKDLIELHASIYSVFRNFVTPEFKFYFHTVKKKIVIDETNRDYSLIFSNDFMRAYNEKQKRESFYDISFYLTIEQDLLDTLNEPVMNKKHFADNNFEEFQRIIRAKLENFKDRIELIEELLSKYHPIRLKEYTKDGVIYSKQCEFYNFLVGMNEAPFICNRKDLYLKEKMHGGVKEVYFANKHGKILNDDLSEKYFSAIEISEYAPKSQSDLFDKINALDSEFIFMHAYSPKNSQVLKDKLAFTSRRIIISGGSKEQGMTLGCLSELVGNGDITLGSYGNSLVLFADSFEKMKQSVKECVSSLNAKGFLANAATFSMENYFFAKHCSFITLPFIFDVTSNNFADFIAMRAMSFDGNQENNAWGNSVMTLKSEINSPFYLNFHMPTDFGSASAGHTLILGSTGSGKTVFMSMTLNAMGQFVHNFPANVSKDKQKLTMVYMDKDYGAYGNIVAMGGEYVKIELGTDTGLNPFAWAACVQKTNATMEQKQTAISVVKELVKNLATKSDEKDENGNSISFSLADSNTLAAAVTNLITGDMNLDYPITQLINAFGKDHNDPNGLVARLAPFCKSTNGEFQWLFDNKATDRLDFSKTIIGVDGSSFLDNNDVSPFICFYLFARIQEAMDGRRFVLDIDEAWKYLGDPKVAYFVRDMLKTARKRNAIVRLATQSITDLLACPIADTIREQCPTKIFLRNDGGNLSDYQRLANVTEKEFEIITKGLDRKILYKQDGSPSVIASFNLRGIPKEYLKILSTDTVFVKEIDKIIQNHSIIDKYQALRQMYQQIKEY.

597–604 contributes to the ATP binding site; it reads GSTGSGKT.

Belongs to the TrbE/VirB4 family. In terms of assembly, component of the Cag type IV secretion system, which is composed of a wheel-shaped outer membrane complex (OMC) and an inner membrane complex (IMC). Interacts with CagV and CagBeta.

It is found in the cell inner membrane. It carries out the reaction ATP + H2O + cellular proteinSide 1 = ADP + phosphate + cellular proteinSide 2.. Functionally, ATPase component of the type IV secretion system Cag (Cag-T4SS). Acts as a molecular motor to provide the energy that is required for the export of proteins. Required for CagA translocation and induction of IL-8 in host gastric epithelial cells. Plays a key role in Cag-T4SS pilus biogenesis, especially in the localization and stabilization of the pilus-associated components CagI, CagL and the surface protein CagH. Is also critical for assembly of the entire cytoplasmic portion of the Cag inner membrane complex (IMC). This is Type IV secretion system protein CagE from Helicobacter pylori (strain ATCC 700392 / 26695) (Campylobacter pylori).